Reading from the N-terminus, the 259-residue chain is Thiazole synthase (259 aa).

Lysine 95 functions as the Schiff-base intermediate with DXP in the catalytic mechanism. 1-deoxy-D-xylulose 5-phosphate contacts are provided by residues glycine 156, 182-183 (AG), and 204-205 (AS).

Belongs to the ThiG family. As to quaternary structure, homotetramer. Forms heterodimers with either ThiH or ThiS.

The protein resides in the cytoplasm. It carries out the reaction [ThiS sulfur-carrier protein]-C-terminal-Gly-aminoethanethioate + 2-iminoacetate + 1-deoxy-D-xylulose 5-phosphate = [ThiS sulfur-carrier protein]-C-terminal Gly-Gly + 2-[(2R,5Z)-2-carboxy-4-methylthiazol-5(2H)-ylidene]ethyl phosphate + 2 H2O + H(+). Its pathway is cofactor biosynthesis; thiamine diphosphate biosynthesis. Its function is as follows. Catalyzes the rearrangement of 1-deoxy-D-xylulose 5-phosphate (DXP) to produce the thiazole phosphate moiety of thiamine. Sulfur is provided by the thiocarboxylate moiety of the carrier protein ThiS. In vitro, sulfur can be provided by H(2)S. This Corynebacterium aurimucosum (strain ATCC 700975 / DSM 44827 / CIP 107346 / CN-1) (Corynebacterium nigricans) protein is Thiazole synthase.